Reading from the N-terminus, the 229-residue chain is MIPIDIVERGLQDYAACFDEMQTFTARRGPDTPDTIWLVEHPPVFTLGLAGDPAHLLAPGNIPLVKVDRGGQITYHGPGQVVAYLLLDLRRRGLFVKALVDAIEAAVIQTLATYNVASERKAGAPGIYLSSGPHAGAKIAALGLKIRNGCSYHGVSLNLAMDLSPFTQINPCGYAGLETVDMVTAGARDASGRAVDANDWQTVSRDLANALVAQLQQRAQAHPAEAATA.

A BPL/LPL catalytic domain is found at 30–223; the sequence is PDTPDTIWLV…QLQQRAQAHP (194 aa). Substrate is bound by residues 69–76, 141–143, and 154–156; these read RGGQITYH, ALG, and GVS. Catalysis depends on Cys-172, which acts as the Acyl-thioester intermediate.

This sequence belongs to the LipB family.

It is found in the cytoplasm. The enzyme catalyses octanoyl-[ACP] + L-lysyl-[protein] = N(6)-octanoyl-L-lysyl-[protein] + holo-[ACP] + H(+). Its pathway is protein modification; protein lipoylation via endogenous pathway; protein N(6)-(lipoyl)lysine from octanoyl-[acyl-carrier-protein]: step 1/2. Its function is as follows. Catalyzes the transfer of endogenously produced octanoic acid from octanoyl-acyl-carrier-protein onto the lipoyl domains of lipoate-dependent enzymes. Lipoyl-ACP can also act as a substrate although octanoyl-ACP is likely to be the physiological substrate. This chain is Octanoyltransferase, found in Ralstonia pickettii (strain 12J).